The chain runs to 240 residues: Small ribosomal subunit protein eS4 (240 aa).

An S4 RNA-binding domain is found at 37–99; the sequence is VPLVVLLRDV…RGEFFRVFPD (63 aa).

The protein belongs to the eukaryotic ribosomal protein eS4 family.

The protein is Small ribosomal subunit protein eS4 of Halorubrum lacusprofundi (strain ATCC 49239 / DSM 5036 / JCM 8891 / ACAM 34).